Reading from the N-terminus, the 433-residue chain is Xylose isomerase (433 aa).

Catalysis depends on residues H99 and D102. Mg(2+) contacts are provided by E230, E266, H269, D294, D305, D307, and D337.

It belongs to the xylose isomerase family. In terms of assembly, homotetramer. Mg(2+) is required as a cofactor.

It localises to the cytoplasm. It carries out the reaction alpha-D-xylose = alpha-D-xylulofuranose. The protein is Xylose isomerase of Cereibacter sphaeroides (strain ATCC 17025 / ATH 2.4.3) (Rhodobacter sphaeroides).